The sequence spans 249 residues: Probable septum site-determining protein MinC (249 aa).

The segment at 115 to 144 is disordered; that stretch reads PTAVSPPPPPPPPPARAEPAPPAARPAPGR. Pro residues predominate over residues 118–139; sequence VSPPPPPPPPPARAEPAPPAAR.

This sequence belongs to the MinC family. In terms of assembly, interacts with MinD and FtsZ.

Functionally, cell division inhibitor that blocks the formation of polar Z ring septums. Rapidly oscillates between the poles of the cell to destabilize FtsZ filaments that have formed before they mature into polar Z rings. Prevents FtsZ polymerization. The chain is Probable septum site-determining protein MinC from Xanthomonas axonopodis pv. citri (strain 306).